We begin with the raw amino-acid sequence, 387 residues long: MNNVVIVDCIRTPMGRSKAGAFRNVRAEDLSAHLMKGLISRNPQLDPNSIEDIYWGCVQQTLEQGFNVARNASLLAGIPHTVAATTVNRLCGSSMQALHDATRAIMVGDAETCIIGGVEHMGHVPMNHGVDFHPGMSKSVAKAAGMMGLTAEMLGRMHGISRQMQDEFAARSHQRAHAATIEGRFKNEILPIEGHDENGILKLYDYDEVIRPETTVEGLSNLRPAFDPVNGTVTAGSSSALSDGASAMLVMSEHRAKELGLTIRARVKSMAVAGCDPSIMGYGPVPATQKALKRAGLSIDDIGMVELNEAFAAQSLPCAKDLGLLDKIDEKVNLNGGAIALGHPLGCSGSRISTTLINQMEHHDVQFGLATMCIGLGQGIATVFERV.

Catalysis depends on C91, which acts as the Acyl-thioester intermediate. Residues H343 and C373 each act as proton acceptor in the active site.

The protein belongs to the thiolase-like superfamily. Thiolase family. In terms of assembly, heterotetramer of two alpha chains (FadB) and two beta chains (FadA).

The protein localises to the cytoplasm. It carries out the reaction an acyl-CoA + acetyl-CoA = a 3-oxoacyl-CoA + CoA. The protein operates within lipid metabolism; fatty acid beta-oxidation. Functionally, catalyzes the final step of fatty acid oxidation in which acetyl-CoA is released and the CoA ester of a fatty acid two carbons shorter is formed. This is 3-ketoacyl-CoA thiolase from Photobacterium profundum (strain SS9).